The sequence spans 194 residues: Holliday junction branch migration complex subunit RuvA (194 aa).

Residues 1 to 64 form a domain I region; sequence MISRLTGKLV…EDAHLLFGFA (64 aa). Positions 65-143 are domain II; it reads TAEERKTFRQ…AHTVTDGLFA (79 aa). The segment at 144-147 is flexible linker; the sequence is AAPA. A domain III region spans residues 147–194; it reads AADETEDIVSTLLALGYSEREAKAAVKGVPEGTDVGEGVRLALKNLLK.

Belongs to the RuvA family. In terms of assembly, homotetramer. Forms an RuvA(8)-RuvB(12)-Holliday junction (HJ) complex. HJ DNA is sandwiched between 2 RuvA tetramers; dsDNA enters through RuvA and exits via RuvB. An RuvB hexamer assembles on each DNA strand where it exits the tetramer. Each RuvB hexamer is contacted by two RuvA subunits (via domain III) on 2 adjacent RuvB subunits; this complex drives branch migration. In the full resolvosome a probable DNA-RuvA(4)-RuvB(12)-RuvC(2) complex forms which resolves the HJ.

The protein resides in the cytoplasm. Its function is as follows. The RuvA-RuvB-RuvC complex processes Holliday junction (HJ) DNA during genetic recombination and DNA repair, while the RuvA-RuvB complex plays an important role in the rescue of blocked DNA replication forks via replication fork reversal (RFR). RuvA specifically binds to HJ cruciform DNA, conferring on it an open structure. The RuvB hexamer acts as an ATP-dependent pump, pulling dsDNA into and through the RuvAB complex. HJ branch migration allows RuvC to scan DNA until it finds its consensus sequence, where it cleaves and resolves the cruciform DNA. In Neisseria meningitidis serogroup B (strain ATCC BAA-335 / MC58), this protein is Holliday junction branch migration complex subunit RuvA.